Reading from the N-terminus, the 203-residue chain is SCO2-like protein RT0576 (203 aa).

A Thioredoxin domain is found at 42-203 (KDNIKIGEAF…KEIMEFLRNE (162 aa)). 3 residues coordinate Cu cation: cysteine 80, cysteine 84, and histidine 170.

Belongs to the SCO1/2 family.

This is SCO2-like protein RT0576 from Rickettsia typhi (strain ATCC VR-144 / Wilmington).